A 174-amino-acid polypeptide reads, in one-letter code: MATKVQGKHAAEKENDDGLREKMIAVNRVSKVVKGGRTMSFAALSVVGDGDGRIGMGKGKAREVPVSVQKAMEQARRGMFKVALKNGTLHHTVVGKHGASTVLISPAAEGTGVIAGGPMRAIFEVMGVRNVVAKSLGSSNPYNLVRATLNGLRASLTPAEVAAKRGKSVEEILG.

The region spanning 19–82 (LREKMIAVNR…EQARRGMFKV (64 aa)) is the S5 DRBM domain.

Belongs to the universal ribosomal protein uS5 family. In terms of assembly, part of the 30S ribosomal subunit. Contacts proteins S4 and S8.

With S4 and S12 plays an important role in translational accuracy. Functionally, located at the back of the 30S subunit body where it stabilizes the conformation of the head with respect to the body. The protein is Small ribosomal subunit protein uS5 of Bordetella bronchiseptica (strain ATCC BAA-588 / NCTC 13252 / RB50) (Alcaligenes bronchisepticus).